We begin with the raw amino-acid sequence, 269 residues long: Formamidopyrimidine-DNA glycosylase (269 aa).

Residue Pro2 is the Schiff-base intermediate with DNA of the active site. Glu3 (proton donor) is an active-site residue. Catalysis depends on Lys57, which acts as the Proton donor; for beta-elimination activity. The DNA site is built by His90, Arg109, and Lys150. An FPG-type zinc finger spans residues Gln235–Asn269. Arg259 functions as the Proton donor; for delta-elimination activity in the catalytic mechanism.

It belongs to the FPG family. In terms of assembly, monomer. Zn(2+) is required as a cofactor.

It catalyses the reaction Hydrolysis of DNA containing ring-opened 7-methylguanine residues, releasing 2,6-diamino-4-hydroxy-5-(N-methyl)formamidopyrimidine.. It carries out the reaction 2'-deoxyribonucleotide-(2'-deoxyribose 5'-phosphate)-2'-deoxyribonucleotide-DNA = a 3'-end 2'-deoxyribonucleotide-(2,3-dehydro-2,3-deoxyribose 5'-phosphate)-DNA + a 5'-end 5'-phospho-2'-deoxyribonucleoside-DNA + H(+). Functionally, involved in base excision repair of DNA damaged by oxidation or by mutagenic agents. Acts as a DNA glycosylase that recognizes and removes damaged bases. Has a preference for oxidized purines, such as 7,8-dihydro-8-oxoguanine (8-oxoG). Has AP (apurinic/apyrimidinic) lyase activity and introduces nicks in the DNA strand. Cleaves the DNA backbone by beta-delta elimination to generate a single-strand break at the site of the removed base with both 3'- and 5'-phosphates. In Baumannia cicadellinicola subsp. Homalodisca coagulata, this protein is Formamidopyrimidine-DNA glycosylase.